A 625-amino-acid polypeptide reads, in one-letter code: Threonine--tRNA ligase (625 aa).

Residues 1–149 (MRVLLIHAKR…RNYEAKTTAR (149 aa)) form an editing domain region. Catalytic stretches follow at residues 197–494 (NPVN…PYIP) and 198–494 (PVNK…PYIP). The Zn(2+) site is built by C291, H342, and H463.

Belongs to the class-II aminoacyl-tRNA synthetase family. In terms of assembly, homodimer. Requires Zn(2+) as cofactor.

The protein localises to the cytoplasm. The enzyme catalyses tRNA(Thr) + L-threonine + ATP = L-threonyl-tRNA(Thr) + AMP + diphosphate + H(+). Catalyzes the attachment of threonine to tRNA(Thr) in a two-step reaction: L-threonine is first activated by ATP to form Thr-AMP and then transferred to the acceptor end of tRNA(Thr). Also edits incorrectly charged L-seryl-tRNA(Thr). The chain is Threonine--tRNA ligase from Hyperthermus butylicus (strain DSM 5456 / JCM 9403 / PLM1-5).